The chain runs to 70 residues: UPF0434 protein MCA0634 (70 aa).

It belongs to the UPF0434 family.

In Methylococcus capsulatus (strain ATCC 33009 / NCIMB 11132 / Bath), this protein is UPF0434 protein MCA0634.